The following is a 108-amino-acid chain: Probable 4-amino-4-deoxy-L-arabinose-phosphoundecaprenol flippase subunit ArnE (108 aa).

A run of 3 helical transmembrane segments spans residues 36-56 (SLWL…LVLQ), 58-78 (LDVG…TLAG), and 85-105 (PVDV…FQLG).

The protein belongs to the ArnE family. As to quaternary structure, heterodimer of ArnE and ArnF.

The protein localises to the cell inner membrane. The protein operates within bacterial outer membrane biogenesis; lipopolysaccharide biosynthesis. In terms of biological role, translocates 4-amino-4-deoxy-L-arabinose-phosphoundecaprenol (alpha-L-Ara4N-phosphoundecaprenol) from the cytoplasmic to the periplasmic side of the inner membrane. The sequence is that of Probable 4-amino-4-deoxy-L-arabinose-phosphoundecaprenol flippase subunit ArnE from Pseudomonas syringae pv. syringae (strain B728a).